Here is a 229-residue protein sequence, read N- to C-terminus: Protein 33K (229 aa).

Residues 1–157 are disordered; that stretch reads MAPKKKLQLP…GALRLAPNEP (157 aa). Acidic residues predominate over residues 14–54; sequence TDEEEYWDSQAEEVLDEEEEDMMEDWESLDEEASEVEEVSD. Composition is skewed to low complexity over residues 55–64, 71–82, and 100–122; these read ETPSPSVAFP, SATGSSMATTSA, and TTGTRAAHTAPAAAAAAATAAAT. The interval 172–199 is necessary for nuclear subcellular location; sequence YAIFQQSRGQEQELKIKNRSLRSLTRSC. Residues 178–198 are RS-repeat; required for splicing enhancer activity; the sequence is SRGQEQELKIKNRSLRSLTRS.

The protein belongs to the adenoviridae splicing factor family. As to quaternary structure, homooligomer. Interacts with DBP; this interaction occurs at a unique vertex during genome packaging. Interacts with IVa2; this interaction occurs at a unique vertex during genome packaging and seems to potentiate IVa2 and 33K oligomerization. Phosphorylated in vitro by human PKA and PRKDC. PRKDC inhibits, whereas PKA activates the splicing factor.

Its subcellular location is the host nucleus. Its function is as follows. Promotes alternative splicing of late transcripts by promoting splicing at weak 3' splice sites. Required for the temporal activation of major late pre-mRNA splicing at late times of infection. Induces the splicing and expression of the late capsid vertex protein. Probably functions as the small terminase that is part of the molecular motor that translocates genomic DNA in empty capsid during DNA packaging. This motor is located at a unique vertex and comprises at least the IVa2 ATPase, the small terminase 33K and probably a portal. Forms a ring-like structure of about 17 nm in which genomic DNA is translocated into the capsid. Stimulates IVa2 ATPase activity in the presence of the viral genome. Once the DNA is packaged, the terminase detaches: the 33K protein is present in the empty particles, but not in the mature virions. Also involved in virion assembly. This is Protein 33K from Homo sapiens (Human).